Consider the following 268-residue polypeptide: Thiazole synthase (268 aa).

K96 functions as the Schiff-base intermediate with DXP in the catalytic mechanism. Residues G157, 185 to 186 (AG), and 207 to 208 (NT) contribute to the 1-deoxy-D-xylulose 5-phosphate site. The interval 238 to 268 (PMRPREAASPSSPVEGVPFTPTGPRPGRGPQ) is disordered. Over residues 258–268 (PTGPRPGRGPQ) the composition is skewed to pro residues.

This sequence belongs to the ThiG family. As to quaternary structure, homotetramer. Forms heterodimers with either ThiH or ThiS.

The protein localises to the cytoplasm. It carries out the reaction [ThiS sulfur-carrier protein]-C-terminal-Gly-aminoethanethioate + 2-iminoacetate + 1-deoxy-D-xylulose 5-phosphate = [ThiS sulfur-carrier protein]-C-terminal Gly-Gly + 2-[(2R,5Z)-2-carboxy-4-methylthiazol-5(2H)-ylidene]ethyl phosphate + 2 H2O + H(+). Its pathway is cofactor biosynthesis; thiamine diphosphate biosynthesis. Its function is as follows. Catalyzes the rearrangement of 1-deoxy-D-xylulose 5-phosphate (DXP) to produce the thiazole phosphate moiety of thiamine. Sulfur is provided by the thiocarboxylate moiety of the carrier protein ThiS. In vitro, sulfur can be provided by H(2)S. In Thermus thermophilus (strain ATCC BAA-163 / DSM 7039 / HB27), this protein is Thiazole synthase.